Consider the following 199-residue polypeptide: Thymidine kinase (199 aa).

ATP contacts are provided by residues 23-30 (GSMFSGKT) and 95-98 (DEAQ). Residue Glu-96 is the Proton acceptor of the active site. Zn(2+) is bound by residues Cys-152, Cys-155, Cys-184, and Cys-187.

It belongs to the thymidine kinase family. Homotetramer.

Its subcellular location is the cytoplasm. It carries out the reaction thymidine + ATP = dTMP + ADP + H(+). In Bacteroides thetaiotaomicron (strain ATCC 29148 / DSM 2079 / JCM 5827 / CCUG 10774 / NCTC 10582 / VPI-5482 / E50), this protein is Thymidine kinase.